The sequence spans 266 residues: Glucosamine-6-phosphate deaminase (266 aa).

Aspartate 72 (proton acceptor; for enolization step) is an active-site residue. Aspartate 141 serves as the catalytic For ring-opening step. Histidine 143 (proton acceptor; for ring-opening step) is an active-site residue. Glutamate 148 functions as the For ring-opening step in the catalytic mechanism.

It belongs to the glucosamine/galactosamine-6-phosphate isomerase family. NagB subfamily. In terms of assembly, homohexamer.

It catalyses the reaction alpha-D-glucosamine 6-phosphate + H2O = beta-D-fructose 6-phosphate + NH4(+). It participates in amino-sugar metabolism; N-acetylneuraminate degradation; D-fructose 6-phosphate from N-acetylneuraminate: step 5/5. Allosterically activated by N-acetylglucosamine 6-phosphate (GlcNAc6P). Its function is as follows. Catalyzes the reversible isomerization-deamination of glucosamine 6-phosphate (GlcN6P) to form fructose 6-phosphate (Fru6P) and ammonium ion. This Yersinia enterocolitica serotype O:8 / biotype 1B (strain NCTC 13174 / 8081) protein is Glucosamine-6-phosphate deaminase.